Here is a 153-residue protein sequence, read N- to C-terminus: Transcriptional regulator MraZ (153 aa).

2 consecutive SpoVT-AbrB domains span residues 7-61 and 90-133; these read KEKH…LPDV and LEMV…EPGR.

The protein belongs to the MraZ family. Forms oligomers.

The protein localises to the cytoplasm. The protein resides in the nucleoid. This Chlorobium luteolum (strain DSM 273 / BCRC 81028 / 2530) (Pelodictyon luteolum) protein is Transcriptional regulator MraZ.